The following is a 73-amino-acid chain: Mu-conotoxin PIIIA (73 aa).

The signal sequence occupies residues 1-19 (MSKLGVLLTICLLLFPITA). The propeptide occupies 20–49 (LPMDGDQPADRLAERMQDNISSEEHPFEKR). At Gln-50 the chain carries Pyrrolidone carboxylic acid. 6 disulfide bridges follow: Cys-53–Cys-65, Cys-53–Cys-70, Cys-54–Cys-70, Cys-54–Cys-71, Cys-60–Cys-65, and Cys-60–Cys-71. Residue Pro-57 is modified to 4-hydroxyproline. Pro-67 bears the 4-hydroxyproline mark. At Cys-71 the chain carries Cysteine amide.

Belongs to the conotoxin M superfamily. Post-translationally, 3D-structure of 3 disulfide-bond connectivities isomers is described (PIIIA-1 (C1-C5, C2-C6, C3-C4), PIIIA-2 (C1-C4, C2-C5, C3-C6) and PIIIA-3 (C1-C2, C3-C4, C5-C6)). Only PIIIA-2 contains the cysteine connectivity described as typical for native mu-conotoxins. However, PIIIA-1 is more potent than PIIIA-2, suggesting another possible disulfid connectivity. For this reason, both connectivities have been indicated in features. As to expression, expressed by the venom duct.

It localises to the secreted. Functionally, mu-conotoxins block voltage-gated sodium channels (Nav). This toxin potently blocks rNav1.4/SCN4A (IC(50)=36-41 nM). It also moderately blocks rNav1.1/SCN1A (IC(50)=120 nM), rNav1.2/SCN2A (IC(50)=620 nM), rNav1.3/SCN3A (IC(50)=3.2 uM), mNav1.6/SCN8A (IC(50)=100 nM). This inhibition is reversible. The block of Nav1.1, Nav1.2, and Nav1.6 is modified when beta-subunits are coexpressed with alpha subunits. Hence, blocks of channels containing the beta-1 and beta-3 subunits are more potent (compared to channels without beta subunits), whereas blocks of channels containing the beta-2 and beta-4 are less potent (compared to channels without beta subunits). In vivo, this peptide causes flaccid paralysis in both mice and fish. The sequence is that of Mu-conotoxin PIIIA from Conus purpurascens (Purple cone).